The following is a 178-amino-acid chain: Large ribosomal subunit protein uL6 (178 aa).

The protein belongs to the universal ribosomal protein uL6 family. In terms of assembly, part of the 50S ribosomal subunit.

Its function is as follows. This protein binds to the 23S rRNA, and is important in its secondary structure. It is located near the subunit interface in the base of the L7/L12 stalk, and near the tRNA binding site of the peptidyltransferase center. The protein is Large ribosomal subunit protein uL6 of Corynebacterium kroppenstedtii (strain DSM 44385 / JCM 11950 / CIP 105744 / CCUG 35717).